The chain runs to 226 residues: Protein Thf1 (226 aa).

Positions 183-213 (EEKMQKDLDLYRSNLEKMDQLLTVIEEALQA) form a coiled coil.

This sequence belongs to the THF1 family.

May be involved in photosynthetic membrane biogenesis. The protein is Protein Thf1 of Gloeothece citriformis (strain PCC 7424) (Cyanothece sp. (strain PCC 7424)).